We begin with the raw amino-acid sequence, 538 residues long: Phosphatidylethanolamine transferase Mcr-2 (538 aa).

5 consecutive transmembrane segments (helical) span residues 14-34 (PFVL…LTFF), 47-67 (LGFI…IVVL), 72-92 (YVLK…SYFT), 121-141 (LAFF…VAVA), and 161-181 (VSLV…ASFF). Positions 244 and 283 each coordinate Zn(2+). 3 cysteine pairs are disulfide-bonded: C279/C289, C354/C362, and C412/C420. Residue T283 is modified to Phosphothreonine. Zn(2+)-binding residues include D463 and H464.

This sequence belongs to the phosphoethanolamine transferase family. Monomer. Phosphorylated at Thr-283; may represent an intermediate in the catalytic mechanism.

It is found in the cell inner membrane. The catalysed reaction is lipid A (E. coli) + a 1,2-diacyl-sn-glycero-3-phosphoethanolamine + H(+) = lipid A 4'-(2-aminoethyl diphosphate) (E. coli) + a 1,2-diacyl-sn-glycerol. Its function is as follows. Probably catalyzes the addition of a phosphoethanolamine moiety to lipid A. Phosphoethanolamine modification of lipid A confers polymyxin resistance. Confers resistance to polymyxin-type antibiotics such as colistin. This Escherichia coli protein is Phosphatidylethanolamine transferase Mcr-2.